An 884-amino-acid chain; its full sequence is Probable leucine--tRNA ligase, cytoplasmic (884 aa).

Residues P40–H50 carry the 'HIGH' region motif. The short motif at K566–S570 is the 'KMSKS' region element. K569 serves as a coordination point for ATP.

Belongs to the class-I aminoacyl-tRNA synthetase family.

The protein localises to the cytoplasm. The enzyme catalyses tRNA(Leu) + L-leucine + ATP = L-leucyl-tRNA(Leu) + AMP + diphosphate. This is Probable leucine--tRNA ligase, cytoplasmic from Vairimorpha ceranae (strain BRL01) (Microsporidian parasite).